A 399-amino-acid chain; its full sequence is Rho GTPase-activating protein gacC (399 aa).

The segment covering 1-13 (MESKDQNVYRKGS) has biased composition (basic and acidic residues). Positions 1–80 (MESKDQNVYR…SSSTSTTPVK (80 aa)) are disordered. Residues 14–31 (DNFSKGSNTFFGNLKSIS) are compositionally biased toward polar residues. Residues 61–79 (SVDSSSSNPSSSSTSTTPV) are compositionally biased toward low complexity. The Rho-GAP domain maps to 186–375 (VELEESFKTA…NLISFFQQIF (190 aa)).

The protein resides in the cytoplasm. Functionally, rho GTPase-activating protein involved in the signal transduction pathway. The sequence is that of Rho GTPase-activating protein gacC (gacC) from Dictyostelium discoideum (Social amoeba).